The primary structure comprises 103 residues: Large ribosomal subunit protein eL14 (103 aa).

Belongs to the eukaryotic ribosomal protein eL14 family.

The chain is Large ribosomal subunit protein eL14 from Ignicoccus hospitalis (strain KIN4/I / DSM 18386 / JCM 14125).